Reading from the N-terminus, the 248-residue chain is PF03932 family protein CutC (248 aa).

Belongs to the CutC family. In terms of assembly, homodimer.

The protein resides in the cytoplasm. The protein is PF03932 family protein CutC of Escherichia coli O157:H7.